The chain runs to 248 residues: Probable transcriptional regulatory protein AZC_0510 (248 aa).

This sequence belongs to the TACO1 family.

Its subcellular location is the cytoplasm. This is Probable transcriptional regulatory protein AZC_0510 from Azorhizobium caulinodans (strain ATCC 43989 / DSM 5975 / JCM 20966 / LMG 6465 / NBRC 14845 / NCIMB 13405 / ORS 571).